The primary structure comprises 191 residues: Thymidine kinase (191 aa).

ATP is bound by residues 15-22 and 88-91; these read GPMYSGKT and DEAQ. Glu89 (proton acceptor) is an active-site residue. Positions 145, 148, 183, and 186 each coordinate Zn(2+).

It belongs to the thymidine kinase family. As to quaternary structure, homotetramer.

Its subcellular location is the cytoplasm. The enzyme catalyses thymidine + ATP = dTMP + ADP + H(+). This chain is Thymidine kinase, found in Clostridium botulinum (strain Loch Maree / Type A3).